Here is a 29-residue protein sequence, read N- to C-terminus: Cyclotide mobo-B (29 aa).

Positions 1 to 29 (GKPICGETCAKGKCYTPKCTCNWPICYKN) form a cross-link, cyclopeptide (Gly-Asn). 3 disulfides stabilise this stretch: C5–C19, C9–C21, and C14–C26.

This sequence belongs to the cyclotide family. In terms of processing, this is a cyclic peptide.

In terms of biological role, probably participates in a plant defense mechanism. This chain is Cyclotide mobo-B, found in Melicytus obovatus (Hymenanthera obovata).